Consider the following 211-residue polypeptide: PITH domain-containing protein CG6153 (211 aa).

The 173-residue stretch at aspartate 20–arginine 192 folds into the PITH domain.

The protein belongs to the PITHD1 family.

This is PITH domain-containing protein CG6153 from Drosophila melanogaster (Fruit fly).